A 434-amino-acid polypeptide reads, in one-letter code: Eukaryotic translation initiation factor 3 subunit E (434 aa).

Positions 219-392 (FFNHPKGRDL…GHVVMGTQPL (174 aa)) constitute a PCI domain.

The protein belongs to the eIF-3 subunit E family. As to quaternary structure, component of the eukaryotic translation initiation factor 3 (eIF-3) complex. The eIF-3 complex interacts with pix. Interacts with mxt.

The protein resides in the cytoplasm. In terms of biological role, component of the eukaryotic translation initiation factor 3 (eIF-3) complex, which is involved in protein synthesis of a specialized repertoire of mRNAs and, together with other initiation factors, stimulates binding of mRNA and methionyl-tRNAi to the 40S ribosome. The eIF-3 complex specifically targets and initiates translation of a subset of mRNAs involved in cell proliferation. This chain is Eukaryotic translation initiation factor 3 subunit E (eIF3-S6), found in Drosophila virilis (Fruit fly).